The following is a 321-amino-acid chain: Cytochrome f (321 aa).

The N-terminal stretch at 1 to 37 is a signal peptide; sequence MKIYRQIKQSFSITKIVFSFFISLLLNLVAQPTICQA. The heme site is built by phenylalanine 38, cysteine 58, cysteine 61, and histidine 62. A helical transmembrane segment spans residues 287-306; the sequence is VQGLIAFFISVVLAQIFLVL.

Belongs to the cytochrome f family. The 4 large subunits of the cytochrome b6-f complex are cytochrome b6, subunit IV (17 kDa polypeptide, petD), cytochrome f and the Rieske protein, while the 4 small subunits are PetG, PetL, PetM and PetN. The complex functions as a dimer. Heme is required as a cofactor.

It localises to the plastid. It is found in the cyanelle thylakoid membrane. Its function is as follows. Component of the cytochrome b6-f complex, which mediates electron transfer between photosystem II (PSII) and photosystem I (PSI), cyclic electron flow around PSI, and state transitions. This Cyanophora paradoxa protein is Cytochrome f (petA).